We begin with the raw amino-acid sequence, 351 residues long: Transcription factor Atoh1 (351 aa).

Disordered regions lie at residues 16 to 39 (LGDH…PATL) and 89 to 116 (EAAA…SKSP). Positions 26–36 (HHVPPLTPQPP) are enriched in pro residues. The bHLH domain occupies 156-208 (QRRLAANARERRRMHGLNHAFDQLRNVIPSFNNDKKLSKYETLQMAQIYINAL). 2 disordered regions span residues 244–278 (GAGA…GPAS) and 308–351 (LSPS…DEAS). Low complexity predominate over residues 247–256 (ASAVAGAQPA). Residues 258 to 268 (GGGPRPTPPGP) are compositionally biased toward pro residues. Basic and acidic residues predominate over residues 332-351 (HRSDGEFSPHSHYSDSDEAS).

As to quaternary structure, efficient DNA binding requires dimerization with another bHLH protein. In terms of tissue distribution, developing nervous system, and in adult epithelial cells of the gastrointestinal tract.

It localises to the nucleus. Functionally, transcriptional regulator. Activates E box-dependent transcription in collaboration with TCF3/E47, but the activity is completely antagonized by the negative regulator of neurogenesis HES1. Plays a role in the differentiation of subsets of neural cells by activating E box-dependent transcription. The chain is Transcription factor Atoh1 from Mus musculus (Mouse).